A 194-amino-acid polypeptide reads, in one-letter code: Holliday junction branch migration complex subunit RuvA (194 aa).

Residues 1-61 (MIASLSGLLE…EDSVSLYGFA (61 aa)) are domain I. Residues 62–136 (SVLECTVFEQ…GKLTSVPLEN (75 aa)) are domain II. Positions 136–140 (NRKQE) are flexible linker. A domain III region spans residues 141–194 (QAVDRSAEIVQALIGLGWQRQESAAAVESVLEKDQSLTMPEILRNALRYLAKQE).

It belongs to the RuvA family. As to quaternary structure, homotetramer. Forms an RuvA(8)-RuvB(12)-Holliday junction (HJ) complex. HJ DNA is sandwiched between 2 RuvA tetramers; dsDNA enters through RuvA and exits via RuvB. An RuvB hexamer assembles on each DNA strand where it exits the tetramer. Each RuvB hexamer is contacted by two RuvA subunits (via domain III) on 2 adjacent RuvB subunits; this complex drives branch migration. In the full resolvosome a probable DNA-RuvA(4)-RuvB(12)-RuvC(2) complex forms which resolves the HJ.

It localises to the cytoplasm. Functionally, the RuvA-RuvB-RuvC complex processes Holliday junction (HJ) DNA during genetic recombination and DNA repair, while the RuvA-RuvB complex plays an important role in the rescue of blocked DNA replication forks via replication fork reversal (RFR). RuvA specifically binds to HJ cruciform DNA, conferring on it an open structure. The RuvB hexamer acts as an ATP-dependent pump, pulling dsDNA into and through the RuvAB complex. HJ branch migration allows RuvC to scan DNA until it finds its consensus sequence, where it cleaves and resolves the cruciform DNA. This is Holliday junction branch migration complex subunit RuvA from Tropheryma whipplei (strain Twist) (Whipple's bacillus).